A 418-amino-acid chain; its full sequence is 3-isopropylmalate dehydratase large subunit (418 aa).

[4Fe-4S] cluster is bound by residues C298, C358, and C361.

Belongs to the aconitase/IPM isomerase family. LeuC type 2 subfamily. Heterodimer of LeuC and LeuD. Requires [4Fe-4S] cluster as cofactor.

It catalyses the reaction (2R,3S)-3-isopropylmalate = (2S)-2-isopropylmalate. It participates in amino-acid biosynthesis; L-leucine biosynthesis; L-leucine from 3-methyl-2-oxobutanoate: step 2/4. Its function is as follows. Catalyzes the isomerization between 2-isopropylmalate and 3-isopropylmalate, via the formation of 2-isopropylmaleate. In Thermoanaerobacter sp. (strain X514), this protein is 3-isopropylmalate dehydratase large subunit.